The sequence spans 953 residues: ATP-dependent 6-phosphofructokinase (953 aa).

The interval 1-558 (MIEGISFASF…QLQGFLLTNS (558 aa)) is N-terminal catalytic PFK domain 1. ATP contacts are provided by residues G193, 256–257 (RC), and 286–289 (GDGS). A Mg(2+)-binding site is contributed by D287. Substrate contacts are provided by residues 332–334 (SID), R369, 376–378 (MGR), E433, R460, and 466–469 (HVQR). Catalysis depends on D334, which acts as the Proton acceptor. The tract at residues 559 to 572 (ADKDRPQEPAKDPL) is interdomain linker. The C-terminal regulatory PFK domain 2 stretch occupies residues 573–953 (RVAIVCTGAP…AKEQGIIDPC (381 aa)). Residues R645, 702 to 706 (TISNN), R740, 747 to 749 (QGG), E807, R833, 839 to 842 (HVQQ), and R906 contribute to the beta-D-fructose 2,6-bisphosphate site.

This sequence belongs to the phosphofructokinase type A (PFKA) family. ATP-dependent PFK group I subfamily. Eukaryotic two domain clade 'E' sub-subfamily. Heterooctamer of 4 alpha and 4 beta chains. It depends on Mg(2+) as a cofactor.

The protein resides in the cytoplasm. The enzyme catalyses beta-D-fructose 6-phosphate + ATP = beta-D-fructose 1,6-bisphosphate + ADP + H(+). The protein operates within carbohydrate degradation; glycolysis; D-glyceraldehyde 3-phosphate and glycerone phosphate from D-glucose: step 3/4. Allosterically activated by ADP, AMP, or fructose 2,6-bisphosphate, and allosterically inhibited by ATP or citrate. Its function is as follows. Catalyzes the phosphorylation of D-fructose 6-phosphate to fructose 1,6-bisphosphate by ATP, the first committing step of glycolysis. The protein is ATP-dependent 6-phosphofructokinase (PFK1) of Yarrowia lipolytica (strain CLIB 122 / E 150) (Yeast).